The following is a 97-amino-acid chain: Co-chaperonin GroES (97 aa).

The protein belongs to the GroES chaperonin family. As to quaternary structure, heptamer of 7 subunits arranged in a ring. Interacts with the chaperonin GroEL.

The protein localises to the cytoplasm. Its function is as follows. Together with the chaperonin GroEL, plays an essential role in assisting protein folding. The GroEL-GroES system forms a nano-cage that allows encapsulation of the non-native substrate proteins and provides a physical environment optimized to promote and accelerate protein folding. GroES binds to the apical surface of the GroEL ring, thereby capping the opening of the GroEL channel. The protein is Co-chaperonin GroES of Aeromonas salmonicida.